We begin with the raw amino-acid sequence, 108 residues long: QILLTQSPAIMSASPGQKVTMTCSASSSVSYMYWYQQKPGSSPRLLIYDTSNLASGVPVRFSGSGSATSYSLTITRMQAEDAATYYCQQWSSYPPMLTFGAGTKLELK.

Residues 1–23 (QILLTQSPAIMSASPGQKVTMTC) are framework-1. The cysteines at positions 23 and 87 are disulfide-linked. Positions 24-33 (SASSSVSYMY) are complementarity-determining-1. The framework-2 stretch occupies residues 34 to 48 (WYQQKPGSSPRLLIY). Residues 49-55 (DTSNLAS) form a complementarity-determining-2 region. A framework-3 region spans residues 56-87 (GVPVRFSGSGSATSYSLTITRMQAEDAATYYC). The interval 88 to 98 (QQWSSYPPMLT) is complementarity-determining-3. Positions 99–108 (FGAGTKLELK) are framework-4.

The polypeptide is Ig kappa chain V-VI region NQ2-6.1 (Mus musculus (Mouse)).